Consider the following 51-residue polypeptide: Insulin (51 aa).

Intrachain disulfides connect cysteine 7-cysteine 36, cysteine 19-cysteine 49, and cysteine 35-cysteine 40.

This sequence belongs to the insulin family. Heterodimer of a B chain and an A chain linked by two disulfide bonds.

The protein resides in the secreted. Insulin decreases blood glucose concentration. It increases cell permeability to monosaccharides, amino acids and fatty acids. It accelerates glycolysis, the pentose phosphate cycle, and glycogen synthesis in liver. This is Insulin (INS) from Myocastor coypus (Coypu).